Reading from the N-terminus, the 111-residue chain is Flagellar hook-basal body complex protein FliE (111 aa).

Belongs to the FliE family.

The protein localises to the bacterial flagellum basal body. In Sinorhizobium fredii (strain NBRC 101917 / NGR234), this protein is Flagellar hook-basal body complex protein FliE.